Reading from the N-terminus, the 753-residue chain is Cytoplasmic polyadenylation element-binding protein 3 (753 aa).

Residues 111 to 286 are disordered; it reads VGESTPSSAG…NGSWHGELPP (176 aa). 2 stretches are compositionally biased toward basic and acidic residues: residues 131–142 and 175–188; these read KPTEKISVDEPP and FGKEEQKPEPEVVK. A compositionally biased stretch (low complexity) spans 227-239; sequence SPAKISSNSSSSS. Residues 265 to 279 are compositionally biased toward polar residues; that stretch reads SRQGLSNRDNLSNGS. In terms of domain architecture, RRM spans 298 to 320; that stretch reads IFVGGVPWDITEAALKDSFGEFG. Residues 567–589 form a disordered region; the sequence is KAYAGPHRRPHLTSNSLSKSHGC. Over residues 578-589 the composition is skewed to polar residues; sequence LTSNSLSKSHGC.

In terms of biological role, cytoplasmic polyadenylation element binding protein that binds to and regulates the translation of specific mRNAs. This Caenorhabditis briggsae protein is Cytoplasmic polyadenylation element-binding protein 3 (cpb-3).